Reading from the N-terminus, the 139-residue chain is Large ribosomal subunit protein uL16 (139 aa).

The protein belongs to the universal ribosomal protein uL16 family. Part of the 50S ribosomal subunit.

In terms of biological role, binds 23S rRNA and is also seen to make contacts with the A and possibly P site tRNAs. In Neorickettsia sennetsu (strain ATCC VR-367 / Miyayama) (Ehrlichia sennetsu), this protein is Large ribosomal subunit protein uL16 (rplP).